A 602-amino-acid chain; its full sequence is MDPKPTSMWSSIVKKDPPSKPPVNDGAPAAILGMVGNCKSTKGISIAVVDANAIIEGRQSLTNFADKFVTVPEVLSEIRDPASRRRLAFIPFTIDTMEPSPESLSKVIKFARATGDLQSLSDVDLKLIALSYTLEAQVYGTKNLRDVPPPIQTVRVKRLPEKDLPGWGSNVANLEEWEALENETEEKSNANSKILPLKDLNMNIIASDNVSEVGSVVSHTENHEEDVQEGGKKHRRYPPKKTEIKLEGKMVVEGVDASQGQYDDDDDASDWRPAVSRSTHSKYLRRKARWEHYNALAEQEIQKDQEADKARHTKEANETHAKDSGKNGEDISSILKDMRLEEESLRALQEETEETNAEATLINGEDDIDHDIEVEAEGIDVANQALENLEIASEAEDTFEASSIGDDGSSEQSWSLRALSESSVACITGDYAMQNVILQMGLRLLAPGGMQIRQLHRWILKCHACYTVTPEIGRIFCPKCGNGGTLRKVAVTIGANGAIIAACKPRITLRGTQYSIPMPKGGREAITKNLILREDQLPQKLLHPRTKKKASKPGDEYFVSDDVFLNHHSDRKAPLQPPVRKAMSVFSQKRNPNDNHYSRSMH.

The disordered stretch occupies residues 1-25; it reads MDPKPTSMWSSIVKKDPPSKPPVND. Residues 48–134 enclose the PINc domain; the sequence is VVDANAIIEG…LKLIALSYTL (87 aa). 2 disordered regions span residues 258–278 and 301–331; these read SQGQYDDDDDASDWRPAVSRS and IQKDQEADKARHTKEANETHAKDSGKNGEDI. Basic and acidic residues predominate over residues 301–329; it reads IQKDQEADKARHTKEANETHAKDSGKNGE. Residues 331–365 are a coiled coil; that stretch reads ISSILKDMRLEEESLRALQEETEETNAEATLINGE. The NOB1 zinc finger occupies 452-522; it reads IRQLHRWILK…QYSIPMPKGG (71 aa). Residues Cys462, Cys465, Cys477, and Cys480 each coordinate Zn(2+).

The protein belongs to the NOB1 family. As to quaternary structure, component of the small ribosomal subunit, ribosomal RNA processing complex (SSU RRP complex). Highly expressed in flowers and siliques and at lower levels in roots, hypocotyls, stems, leaves and seeds.

It is found in the nucleus. The protein resides in the nucleoplasm. Its subcellular location is the cytoplasm. Its function is as follows. Essential protein required during embryogenesis and pollen development. Endonuclease cleaving pre-rRNA at the 3' end of the mature 18S rRNA (D-site); cleaves 20S pre-rRNA in the cytoplasm. Required for processing of 20S pre-rRNA precursor and biogenesis of 40S ribosomal subunits. This chain is RNA-binding NOB1-like protein, found in Arabidopsis thaliana (Mouse-ear cress).